The sequence spans 953 residues: Isoleucine--tRNA ligase (953 aa).

The 'HIGH' region signature appears at proline 58–histidine 68. Glutamate 577 provides a ligand contact to L-isoleucyl-5'-AMP. The short motif at lysine 618 to serine 622 is the 'KMSKS' region element. Lysine 621 is an ATP binding site. Zn(2+)-binding residues include cysteine 916, cysteine 919, cysteine 936, and cysteine 939.

This sequence belongs to the class-I aminoacyl-tRNA synthetase family. IleS type 1 subfamily. In terms of assembly, monomer. Requires Zn(2+) as cofactor.

Its subcellular location is the cytoplasm. The catalysed reaction is tRNA(Ile) + L-isoleucine + ATP = L-isoleucyl-tRNA(Ile) + AMP + diphosphate. In terms of biological role, catalyzes the attachment of isoleucine to tRNA(Ile). As IleRS can inadvertently accommodate and process structurally similar amino acids such as valine, to avoid such errors it has two additional distinct tRNA(Ile)-dependent editing activities. One activity is designated as 'pretransfer' editing and involves the hydrolysis of activated Val-AMP. The other activity is designated 'posttransfer' editing and involves deacylation of mischarged Val-tRNA(Ile). This Aeromonas salmonicida (strain A449) protein is Isoleucine--tRNA ligase.